Consider the following 529-residue polypeptide: MSPSEYALEVAKRRTFAIISHPDAGKTTITEKVLLFGNAIQTAGTVKGRGSSHHAKSDWMEMEKQRGISITTSVMQFPYGGCLVNLLDTPGHEDFSEDTYRTLTAVDCCLMVIDAAKGVEDRTRKLMEVTRLRDTPILTFMNKLDRDIRDPMEVLDEVERELKIACSPITWPIGCGKLFKGVYHLYKDETYLYQTGKGHTIQEVRIVKGLNNPDLDVAVGEDLAKQFRQELELVQGASHEFDHDAFLSGDLTPVFFGTALGNFGVDHMLDGLVEWAPAPMPRQTDTREVVAAEEKFTGFVFKIQANMDPKHRDRVAFLRVVSGRFEKGMKLRQVRTKKDVVISDALTFMAGDRSHLEEAYAGDIIGLHNHGTIQIGDTFTQGEDMKFTGIPNFAPELFRRIRLRDPLKQKQLLKGLVQLSEEGAVQVFRPLTNNDLIVGAVGVLQFEVVSSRLKSEYNVEAVYESVNVSTARWVECDDVKKFEEFKRKNEVNLALDGGDNLSYIAPTMVNLNITQERYPEVRFRKTREH.

The region spanning 11 to 280 (AKRRTFAIIS…GLVEWAPAPM (270 aa)) is the tr-type G domain. GTP is bound by residues 20-27 (SHPDAGKT), 88-92 (DTPGH), and 142-145 (NKLD).

It belongs to the TRAFAC class translation factor GTPase superfamily. Classic translation factor GTPase family. PrfC subfamily.

Its subcellular location is the cytoplasm. Functionally, increases the formation of ribosomal termination complexes and stimulates activities of RF-1 and RF-2. It binds guanine nucleotides and has strong preference for UGA stop codons. It may interact directly with the ribosome. The stimulation of RF-1 and RF-2 is significantly reduced by GTP and GDP, but not by GMP. In Yersinia enterocolitica serotype O:8 / biotype 1B (strain NCTC 13174 / 8081), this protein is Peptide chain release factor 3.